Reading from the N-terminus, the 503-residue chain is MDLIPDLAVETWLLLAVTLVLLYLYGTHSHGLFKKLGIPGPTPLPLLGNILSYRKGFWTFDMECYKKYGKVWGFYDGRQPVLAITDPNMIKTVLVKECYSVFTNRRPFGPVGFMKNAISIAEDEEWKRIRSLLSPTFTSGKLKEMVPIIAKYGDVLVRNLRREAETGKPVTLKDVFGAYSMDVITSTSFGVNIDSLNNPQDPFVENTKKLLRFDFLDPFFLSITIFPFIIPILEVLNISIFPREVTSFLRKSVKRIKESRLKDTQKHRVDFLQLMIDSQNSKETESHKALSDLELVAQSIIFIFAGYETTSSVLSFIIYELATHPDVQQKLQEEIDTVLPNKAPPTYDTVLQMEYLDMVVNETLRIFPIAMRLERVCKKDVEINGIFIPKGVVVMIPSYALHHDPKYWPEPEKFLPERFSKKNNDNIDPYIYTPFGSGPRNCIGMRFALMNMKLAIIRVLQNFSFKPCKETQIPLKLRLGGLLQTEKPIVLKIESRDGTVSGA.

C442 serves as a coordination point for heme.

It belongs to the cytochrome P450 family. Heme is required as a cofactor.

It localises to the endoplasmic reticulum membrane. The protein resides in the microsome membrane. The catalysed reaction is an organic molecule + reduced [NADPH--hemoprotein reductase] + O2 = an alcohol + oxidized [NADPH--hemoprotein reductase] + H2O + H(+). Its function is as follows. Catalyzes nifedipine and nilvadipine oxidations. In Macaca fascicularis (Crab-eating macaque), this protein is Cytochrome P450 3A8 (CYP3A8).